A 492-amino-acid chain; its full sequence is N-succinylglutamate 5-semialdehyde dehydrogenase (492 aa).

Gly-220–Gly-225 is an NAD(+) binding site. Residues Glu-243 and Cys-277 contribute to the active site.

Belongs to the aldehyde dehydrogenase family. AstD subfamily.

It catalyses the reaction N-succinyl-L-glutamate 5-semialdehyde + NAD(+) + H2O = N-succinyl-L-glutamate + NADH + 2 H(+). The protein operates within amino-acid degradation; L-arginine degradation via AST pathway; L-glutamate and succinate from L-arginine: step 4/5. Its function is as follows. Catalyzes the NAD-dependent reduction of succinylglutamate semialdehyde into succinylglutamate. This is N-succinylglutamate 5-semialdehyde dehydrogenase from Salmonella paratyphi A (strain AKU_12601).